A 39-amino-acid chain; its full sequence is Photosystem II reaction center protein Y (39 aa).

The helical transmembrane segment at 4–24 threads the bilayer; that stretch reads RVIVVVSPLLIAATWAAINIG.

The protein belongs to the PsbY family. As to quaternary structure, PSII is composed of 1 copy each of membrane proteins PsbA, PsbB, PsbC, PsbD, PsbE, PsbF, PsbH, PsbI, PsbJ, PsbK, PsbL, PsbM, PsbT, PsbX, PsbY, PsbZ, Psb30/Ycf12, peripheral proteins PsbO, CyanoQ (PsbQ), PsbU, PsbV and a large number of cofactors. It forms dimeric complexes.

It localises to the cellular thylakoid membrane. Functionally, loosely associated component of the core of photosystem II (PSII), it is not always seen in crystals. PSII is a light-driven water plastoquinone oxidoreductase, using light energy to abstract electrons from H(2)O, generating a proton gradient subsequently used for ATP formation. The sequence is that of Photosystem II reaction center protein Y from Synechocystis sp. (strain ATCC 27184 / PCC 6803 / Kazusa).